The chain runs to 265 residues: Energy-coupling factor transporter transmembrane protein EcfT (265 aa).

Transmembrane regions (helical) follow at residues 29–49 (VMAFIAIVFLANNWLTYALMF), 63–83 (FLFFIKGLQPIFWLILITLLL), 94–114 (LVDLGLLQITTLGLANGAMMF), 117–137 (FVLIIFMTTLLTLTTSPIELT), 143–163 (ILAPFRLVHLPVHELALMLSI), and 243–263 (RFADTCLLISLAVLSGLLFWL).

This sequence belongs to the energy-coupling factor EcfT family. As to quaternary structure, forms a stable energy-coupling factor (ECF) transporter complex composed of 2 membrane-embedded substrate-binding proteins (S component), 2 ATP-binding proteins (A component) and 2 transmembrane proteins (T component). May be able to interact with more than 1 S component at a time.

The protein resides in the cell membrane. In terms of biological role, transmembrane (T) component of an energy-coupling factor (ECF) ABC-transporter complex. Unlike classic ABC transporters this ECF transporter provides the energy necessary to transport a number of different substrates. This Listeria innocua serovar 6a (strain ATCC BAA-680 / CLIP 11262) protein is Energy-coupling factor transporter transmembrane protein EcfT.